We begin with the raw amino-acid sequence, 938 residues long: Isoleucine--tRNA ligase (938 aa).

The 'HIGH' region motif lies at 58–68 (PYANGSIHIGH). K183 carries the N6-acetyllysine modification. E561 serves as a coordination point for L-isoleucyl-5'-AMP. The 'KMSKS' region signature appears at 602–606 (KMSKS). ATP is bound at residue K605. Positions 901, 904, 921, and 924 each coordinate Zn(2+).

This sequence belongs to the class-I aminoacyl-tRNA synthetase family. IleS type 1 subfamily. As to quaternary structure, monomer. It depends on Zn(2+) as a cofactor.

The protein localises to the cytoplasm. The enzyme catalyses tRNA(Ile) + L-isoleucine + ATP = L-isoleucyl-tRNA(Ile) + AMP + diphosphate. Catalyzes the attachment of isoleucine to tRNA(Ile). As IleRS can inadvertently accommodate and process structurally similar amino acids such as valine, to avoid such errors it has two additional distinct tRNA(Ile)-dependent editing activities. One activity is designated as 'pretransfer' editing and involves the hydrolysis of activated Val-AMP. The other activity is designated 'posttransfer' editing and involves deacylation of mischarged Val-tRNA(Ile). This Shigella flexneri protein is Isoleucine--tRNA ligase.